Reading from the N-terminus, the 994-residue chain is Chloride channel protein 1 (994 aa).

The Cytoplasmic segment spans residues 1–118 (MERSQSQQHG…VLRRKLGEDW (118 aa)). The tract at residues 37–61 (SENGGLQHRPRKDLGPRHNAHPTQI) is disordered. Residues 119–150 (IFLVLLGLLMALVSWCMDYVSAKSLQAYKWTY) form a helical membrane-spanning segment. At 151-158 (AQMQPSLP) the chain is on the extracellular side. A helical membrane pass occupies residues 159-179 (LQYLAWVTFPLILILFSALFC). The Cytoplasmic portion of the chain corresponds to 180-183 (QLIS). The segment at residues 184-189 (PQAVGS) is an intramembrane region (note=Loop between two helices). The Selectivity filter part_1 signature appears at 188–192 (GSGIP). S189 serves as a coordination point for chloride. An intramembrane region (helical) is located at residues 190–195 (GIPEMK). At 196–208 (TILRGVVLKEYLT) the chain is on the cytoplasmic side. An intramembrane region (helical) is located at residues 209–224 (LKAFVAKVVALTAGLG). An intramembrane region (note=Loop between two helices) is located at residues 225–230 (SGIPVG). The Selectivity filter part_2 signature appears at 230–234 (GKEGP). The helical intramembrane region spans 231 to 246 (KEGPFVHIASICAAVL). The Cytoplasmic segment spans residues 247–268 (SKFMSMFSGVYEQPYYYTDILT). 2 consecutive intramembrane regions (helical) follow at residues 269 to 280 (VGCAVGVGCCFG) and 281 to 290 (TPLGGVLFSI). Residues 291 to 301 (EVTSTYFAVRN) lie on the Cytoplasmic side of the membrane. A helical transmembrane segment spans residues 302–321 (YWRGFFAATFSAFVFRVLAV). At 322–347 (WNKDAVTITALFRTNFRMDFPFDLKE) the chain is on the extracellular side. The helical transmembrane segment at 348-376 (LPAFAVIGICCGFLGAVFVYLHRQVMLGV) threads the bilayer. Residues 377 to 390 (RKHKALSQFLAKHR) are Cytoplasmic-facing. The chain crosses the membrane as a helical span at residues 391 to 408 (LLYPGIVTFVIASLTFPP). At 409 to 414 (GMGQFM) the chain is on the extracellular side. An intramembrane region (note=Loop between two helices) is located at residues 415–418 (AGEL). Positions 419-426 (MPREAIST) form an intramembrane region, helical. The Extracellular portion of the chain corresponds to 427 to 457 (LFDNNTWVKHIGDPKSLGQSAVWIHPQVNVV). An intramembrane region (helical) is located at residues 458–475 (IIILLFFVMKFWMSIVAT). Positions 476-482 (TMPIPCG) form an intramembrane region, note=Loop between two helices. A Selectivity filter part_3 motif is present at residues 482–486 (GGFMP). An intramembrane region (helical) is located at residues 483–498 (GFMPVFVLGAAFGRLV). Position 484 (F484) interacts with chloride. Residues 499–521 (GEIMAMLFPEGILFDDIIYKILP) lie on the Extracellular side of the membrane. The segment at residues 522–538 (GGYAVIGAAALTGAVSH) is an intramembrane region (helical). The note=Loop between two helices intramembrane region spans 539 to 540 (TV). Positions 541-554 (STAVICFELTGQIA) form an intramembrane region, helical. Residues 555-557 (HIL) are Extracellular-facing. The helical intramembrane region spans 558-571 (PMMVAVILANMVAQ). The note=Loop between two helices intramembrane region spans 572–575 (SLQP). Positions 576 to 578 (SLY) form an intramembrane region, helical. Residue Y578 participates in chloride binding. The Cytoplasmic segment spans residues 579-994 (DSIIQVKKLP…DEEDEDELIL (416 aa)). The CBS 1 domain occupies 609–668 (MVRDVKFVSASCTYGELRNLLQTTTVKTLPLVDSKDSMILLGSVERSELQSLLQRHLCAE). 3 disordered regions span residues 710 to 769 (EDED…SADQ), 880 to 923 (TKSG…DGAP), and 965 to 994 (NLGP…ELIL). Pro residues predominate over residues 725–741 (TPTPPPPPPPPLPPQFP). Residues 827–882 (IDQSPFQLVEQTTLHKTHTLFSLLGLHLAYVTSMGKLRGVLALEELQKAIKGHTKS) form the CBS 2 domain. The residue at position 892 (S892) is a Phosphoserine. Positions 985 to 994 (DEEDEDELIL) are enriched in acidic residues.

Belongs to the chloride channel (TC 2.A.49) family. ClC-1/CLCN1 subfamily. Homodimer. As to expression, predominantly expressed in skeletal muscles.

The protein localises to the cell membrane. The protein resides in the sarcolemma. It localises to the T-tubule. The enzyme catalyses chloride(in) = chloride(out). It catalyses the reaction bromide(in) = bromide(out). The catalysed reaction is iodide(out) = iodide(in). It carries out the reaction thiocyanate(in) = thiocyanate(out). The enzyme catalyses nitrate(in) = nitrate(out). Modulated by membrane voltage with depolarization favouring channel opening and hyperpolarization favouring channel closure. Inhibited by acidic pH and ATP binding due to a shift of voltage dependence of common gating to more positive voltages. Inhibited by 9-anthracene-carboxylic acid. Its function is as follows. Voltage-gated chloride channel involved in skeletal muscle excitability. Generates most of the plasma membrane chloride conductance in skeletal muscle fibers, stabilizes the resting membrane potential and contributes to the repolarization phase during action potential firing. Forms a homodimeric channel where each subunit has its own ion conduction pathway. Conducts double-barreled currents controlled by two types of gates, two fast glutamate gates that control each subunit independently and a slow common gate that opens and shuts off both subunits simultaneously. Has a significant open probability at muscle resting potential and is further activated upon membrane depolarization. Permeable to small monovalent anions with ion selectivity for chloride &gt; thiocyanate &gt; bromide &gt; nitrate &gt; iodide. The protein is Chloride channel protein 1 (Clcn1) of Rattus norvegicus (Rat).